The following is a 427-amino-acid chain: Serine hydroxymethyltransferase (427 aa).

(6S)-5,6,7,8-tetrahydrofolate-binding positions include Leu-117 and 121-123 (GHL). The residue at position 226 (Lys-226) is an N6-(pyridoxal phosphate)lysine.

The protein belongs to the SHMT family. As to quaternary structure, homodimer. Requires pyridoxal 5'-phosphate as cofactor.

It localises to the cytoplasm. It catalyses the reaction (6R)-5,10-methylene-5,6,7,8-tetrahydrofolate + glycine + H2O = (6S)-5,6,7,8-tetrahydrofolate + L-serine. The catalysed reaction is L-threonine = acetaldehyde + glycine. The enzyme catalyses L-allo-threonine = acetaldehyde + glycine. It participates in one-carbon metabolism; tetrahydrofolate interconversion. It functions in the pathway amino-acid biosynthesis; glycine biosynthesis; glycine from L-serine: step 1/1. Its function is as follows. Its primary function is to catalyze the reversible interconversion of serine and glycine with tetrahydrofolate (THF) serving as the one-carbon carrier. This reaction serves as the major source of one-carbon groups required for the biosynthesis of purines, thymidylate, methionine, and other important biomolecules. Also exhibits THF-independent aldolase activity toward beta-hydroxyamino acids, producing glycine and aldehydes, via a retro-aldol mechanism. Thus, is able to catalyze the cleavage of L-threonine, L-allo-threonine, L-threo-beta-phenylserine and L-erythro-beta-phenylserine. This second activity is likely to be physiological in H.thermophilus, which is an organism that lacks the ortholog gene for the 'real' threonine aldolase characterized in mesophilic bacteria (LtaE), yeast and plants. The protein is Serine hydroxymethyltransferase of Hydrogenobacter thermophilus (strain DSM 6534 / IAM 12695 / TK-6).